Reading from the N-terminus, the 471-residue chain is Vitellogenic carboxypeptidase (471 aa).

The signal sequence occupies residues 1–19 (MVKFHLLVLIAFTCYTCSD). N-linked (GlcNAc...) asparagine glycosylation is present at Asn135. Active-site residues include Ser207, Asp391, and His448.

Belongs to the peptidase S10 family. Synthesized in the fat body of vitellogenic females, secreted into the hemolymph and accumulates in yolk bodies of developing oocytes.

Its subcellular location is the secreted. In terms of biological role, may play a role in activating hydrolytic enzymes that are involved in the degradation of yolk proteins in developing embryos or may function as an exopeptidase in the degradation of vitellogenin. The chain is Vitellogenic carboxypeptidase (VCP) from Aedes aegypti (Yellowfever mosquito).